Here is a 287-residue protein sequence, read N- to C-terminus: ATP synthase gamma chain (287 aa).

It belongs to the ATPase gamma chain family. F-type ATPases have 2 components, CF(1) - the catalytic core - and CF(0) - the membrane proton channel. CF(1) has five subunits: alpha(3), beta(3), gamma(1), delta(1), epsilon(1). CF(0) has three main subunits: a, b and c.

It is found in the cell inner membrane. Produces ATP from ADP in the presence of a proton gradient across the membrane. The gamma chain is believed to be important in regulating ATPase activity and the flow of protons through the CF(0) complex. This is ATP synthase gamma chain from Stenotrophomonas maltophilia (strain K279a).